A 329-amino-acid chain; its full sequence is Flotillin-like protein FloA (329 aa).

A helical membrane pass occupies residues 4–24 (IWGFLILILVLIFLGVFFSFV).

It belongs to the flotillin-like FloA family. Homooligomerizes.

The protein localises to the cell membrane. It localises to the membrane raft. Found in functional membrane microdomains (FMM) that may be equivalent to eukaryotic membrane rafts. FMMs are highly dynamic and increase in number as cells age. Flotillins are thought to be important factors in membrane fluidity. The protein is Flotillin-like protein FloA of Dictyoglomus turgidum (strain DSM 6724 / Z-1310).